The chain runs to 362 residues: 3-dehydroquinate synthase (362 aa).

Residues 71 to 76, 105 to 109, 129 to 130, lysine 142, lysine 151, and 169 to 172 each bind NAD(+); these read DGEQYK, GVVGD, TT, and CLKT. Residues glutamate 184, histidine 247, and histidine 264 each contribute to the Zn(2+) site.

This sequence belongs to the sugar phosphate cyclases superfamily. Dehydroquinate synthase family. The cofactor is Co(2+). Requires Zn(2+) as cofactor. It depends on NAD(+) as a cofactor.

Its subcellular location is the cytoplasm. It catalyses the reaction 7-phospho-2-dehydro-3-deoxy-D-arabino-heptonate = 3-dehydroquinate + phosphate. Its pathway is metabolic intermediate biosynthesis; chorismate biosynthesis; chorismate from D-erythrose 4-phosphate and phosphoenolpyruvate: step 2/7. Its function is as follows. Catalyzes the conversion of 3-deoxy-D-arabino-heptulosonate 7-phosphate (DAHP) to dehydroquinate (DHQ). In Escherichia coli O6:K15:H31 (strain 536 / UPEC), this protein is 3-dehydroquinate synthase.